The sequence spans 548 residues: Chaperonin GroEL (548 aa).

ATP-binding positions include Thr30–Pro33, Lys51, Asp87–Thr91, Gly415, Asn479–Ala481, and Asp495.

This sequence belongs to the chaperonin (HSP60) family. Forms a cylinder of 14 subunits composed of two heptameric rings stacked back-to-back. Interacts with the co-chaperonin GroES.

It localises to the cytoplasm. The catalysed reaction is ATP + H2O + a folded polypeptide = ADP + phosphate + an unfolded polypeptide.. Functionally, together with its co-chaperonin GroES, plays an essential role in assisting protein folding. The GroEL-GroES system forms a nano-cage that allows encapsulation of the non-native substrate proteins and provides a physical environment optimized to promote and accelerate protein folding. The protein is Chaperonin GroEL of Klebsiella aerogenes (strain ATCC 13048 / DSM 30053 / CCUG 1429 / JCM 1235 / KCTC 2190 / NBRC 13534 / NCIMB 10102 / NCTC 10006 / CDC 819-56) (Enterobacter aerogenes).